Consider the following 209-residue polypeptide: Large ribosomal subunit protein uL3 (209 aa).

A disordered region spans residues 141-164 (RAVGSMGGSSDPSRTFKSKKMPGH).

Belongs to the universal ribosomal protein uL3 family. Part of the 50S ribosomal subunit. Forms a cluster with proteins L14 and L19.

In terms of biological role, one of the primary rRNA binding proteins, it binds directly near the 3'-end of the 23S rRNA, where it nucleates assembly of the 50S subunit. The sequence is that of Large ribosomal subunit protein uL3 from Clostridium acetobutylicum (strain ATCC 824 / DSM 792 / JCM 1419 / IAM 19013 / LMG 5710 / NBRC 13948 / NRRL B-527 / VKM B-1787 / 2291 / W).